The primary structure comprises 195 residues: Imidazole glycerol phosphate synthase subunit HisH (195 aa).

Residues 1–193 enclose the Glutamine amidotransferase type-1 domain; sequence MIAIVDYGVG…RETTCNSTQQ (193 aa). Cys-78 functions as the Nucleophile in the catalytic mechanism. Residues His-168 and Glu-170 contribute to the active site.

Heterodimer of HisH and HisF.

It is found in the cytoplasm. The catalysed reaction is 5-[(5-phospho-1-deoxy-D-ribulos-1-ylimino)methylamino]-1-(5-phospho-beta-D-ribosyl)imidazole-4-carboxamide + L-glutamine = D-erythro-1-(imidazol-4-yl)glycerol 3-phosphate + 5-amino-1-(5-phospho-beta-D-ribosyl)imidazole-4-carboxamide + L-glutamate + H(+). The enzyme catalyses L-glutamine + H2O = L-glutamate + NH4(+). Its pathway is amino-acid biosynthesis; L-histidine biosynthesis; L-histidine from 5-phospho-alpha-D-ribose 1-diphosphate: step 5/9. IGPS catalyzes the conversion of PRFAR and glutamine to IGP, AICAR and glutamate. The HisH subunit catalyzes the hydrolysis of glutamine to glutamate and ammonia as part of the synthesis of IGP and AICAR. The resulting ammonia molecule is channeled to the active site of HisF. This Exiguobacterium sibiricum (strain DSM 17290 / CCUG 55495 / CIP 109462 / JCM 13490 / 255-15) protein is Imidazole glycerol phosphate synthase subunit HisH.